A 1181-amino-acid chain; its full sequence is Katanin p80 WD40 repeat-containing subunit B1 homolog KTN80.2 (1181 aa).

WD repeat units lie at residues 13 to 53 (AHSA…SLMS), 56 to 95 (GHTS…MVRA), 98 to 137 (GHRS…CIQT), 140 to 181 (GHSR…HEFK), 183 to 221 (HEGP…LIGS), 224 to 264 (PEAT…DGVD), and 266 to 303 (GWST…IEPY). Residues 114-130 (FLASGSSDANLKIWDIR) carry the DWD box motif. Disordered stretches follow at residues 361 to 383 (AHKS…NKSL), 503 to 597 (KPPR…ESKS), 702 to 739 (TSMA…QTRT), 754 to 869 (KMKS…VIST), and 988 to 1008 (TKTQ…ISGR). Polar residues-rich tracts occupy residues 365–379 (GSLS…QAGD) and 509–526 (RSPS…STDS). 2 stretches are compositionally biased toward basic and acidic residues: residues 530-553 (DSKK…DDRG) and 569-585 (RSER…ELKS). Composition is skewed to polar residues over residues 703-739 (SMAT…QTRT), 754-791 (KMKS…TRTS), 822-841 (SATN…QAKT), and 850-859 (ILNQRQTTNM). The span at 998-1008 (TQKEEPQISGR) shows a compositional bias: basic and acidic residues.

This sequence belongs to the WD repeat KATNB1 family. Component of KTN80-KTN1 complexes composed of a hexamer of KTN1-KTN80 heterodimers that sense microtubule (MT) geometry to confer precise MT severing. Interacts directly with AAA1/KTN1. Interacts with subunits of the CUL4-based E3 ligase complex DDB1A and DDB1B. In terms of tissue distribution, expressed at low levels in siliques, flowers, leaves, stems and roots.

The protein resides in the cytoplasm. It is found in the cytoskeleton. Its function is as follows. May participate in a complex which severs microtubules in an ATP-dependent manner. Microtubule severing may promote rapid reorganization of cellular microtubule arrays. Confers precision to microtubule (MT) severing by specific targeting of KTN1 to MT cleavage sites such as crossover or branching nucleation sites. Together with other KTN80s, regulates cell elongation by modulating MT organization. Negative regulator of abscisic acid (ABA) responses. May function as a substrate receptor for cullin-RING ubiquitin ligase 4 complexes (CRL4), a family of E3 ligases involved in protein degradation. This Arabidopsis thaliana (Mouse-ear cress) protein is Katanin p80 WD40 repeat-containing subunit B1 homolog KTN80.2.